The chain runs to 244 residues: Venom nerve growth factor 2 (244 aa).

The first 18 residues, 1 to 18 (MSMLCYTLIIAFLIGTWA), serve as a signal peptide directing secretion. The propeptide occupies 19-125 (APKSEDNVPL…TLNRNIRAKR (107 aa)). Residues 47–66 (GLKTSRNTDQRHPAPKKAED) show a composition bias toward basic and acidic residues. Residues 47–67 (GLKTSRNTDQRHPAPKKAEDQ) form a disordered region. 3 disulfide bridges follow: C139/C205, C181/C233, and C193/C235.

The protein belongs to the NGF-beta family. Homodimer; non-covalently linked. Expressed by the venom gland.

The protein localises to the secreted. Nerve growth factor is important for the development and maintenance of the sympathetic and sensory nervous systems. It stimulates division and differentiation of sympathetic and embryonic sensory neurons as well as basal forebrain cholinergic neurons in the brain. Its relevance in the snake venom is not clear. However, it has been shown to inhibit metalloproteinase-dependent proteolysis of platelet glycoprotein Ib alpha, suggesting a metalloproteinase inhibition to prevent metalloprotease autodigestion and/or protection against prey proteases. Binds a lipid between the two protein chains in the homodimer. The lipid-bound form promotes histamine relase from mouse mast cells, contrary to the lipid-free form. The polypeptide is Venom nerve growth factor 2 (Tropidechis carinatus (Australian rough-scaled snake)).